Consider the following 504-residue polypeptide: ATP synthase subunit alpha (504 aa).

169-176 (GDRQTGKT) is a binding site for ATP.

Belongs to the ATPase alpha/beta chains family. F-type ATPases have 2 components, CF(1) - the catalytic core - and CF(0) - the membrane proton channel. CF(1) has five subunits: alpha(3), beta(3), gamma(1), delta(1), epsilon(1). CF(0) has three main subunits: a(1), b(2) and c(9-12). The alpha and beta chains form an alternating ring which encloses part of the gamma chain. CF(1) is attached to CF(0) by a central stalk formed by the gamma and epsilon chains, while a peripheral stalk is formed by the delta and b chains.

It is found in the cell membrane. The enzyme catalyses ATP + H2O + 4 H(+)(in) = ADP + phosphate + 5 H(+)(out). Produces ATP from ADP in the presence of a proton gradient across the membrane. The alpha chain is a regulatory subunit. The chain is ATP synthase subunit alpha from Clostridium botulinum (strain ATCC 19397 / Type A).